Consider the following 185-residue polypeptide: Protein LPA2 (185 aa).

The N-terminal 46 residues, 1 to 46 (MALQIHSPCSFSTRPYHLFFTTRNPRFAIKCQNSQIESDTTEDPSR), are a transit peptide targeting the chloroplast. Residues 35–105 (QIESDTTEDP…VFMSEEGAAK (71 aa)) are disordered. Over residues 47–75 (SKNSSSSGVGFGSPASSSSPAKKLSAATS) the composition is skewed to low complexity. The segment covering 83–92 (KREVNRRAPV) has biased composition (basic and acidic residues). Helical transmembrane passes span 115-135 (AFLLTWLGLGIVILIEGIILA) and 152-172 (VYPVFTPSVVLFVAGTTAYGV).

Its subcellular location is the plastid. It is found in the chloroplast membrane. The sequence is that of Protein LPA2 from Arabidopsis thaliana (Mouse-ear cress).